The chain runs to 871 residues: MAAVDSDIEPLPRGGFRCCLCHITTANQPSLDAHLGGRKHRHLVELRATRKAQGLRSVFVSGFPRDVDSTQLSEYFQAFGPVASVVMDKDKGVFAIVEMGDLGAREAVLSQPQHSLGGRRLRVRPREQIEFQSPASRSPKRVAPDSHQLIKALAEAPDVEAQMVKLVGLRELSEAERQLRSLVVALMQEVFAEFFPGCVVHPFGSSINSFDVHGCDLDLFLDLGDLDEPQPAPKAPESPSLDSALASPLDPQALACTPASPPDSQPPASPQDSEALDFEAPSSSLAPRTPDSALASETLASPRSLPPASPLQEDQGDGDQGKAVELAEALKGEKAEGGAMLELVGSILRGCVPGVYRVQTVPSARCPVVKFCHRPSGLHGDISLSNRLALHNSRFLSLCSELDGRVRPLVYTLRCWAQGRGLSGSGPLLNNYALTLLVIYFLQTRDPPVLPTVSQLTQKAGEQVEVDGWDCSFPRDASRLEPSTNKEPLSSLLAQFFSCVSCWDLRGSLLSLREGQALSVAGGLPSNLSEGLRLGPMNLQDPFDLSHNVAANVTSRVAGRLQNCCRAAANYCRSLQYQRRSSRGRDWGLLPLLQPSSPSSILSATPIPLPPASFTQLTAVLAQVLREALGCHIEQGTKRLRSEGGGPGEPPQGGTSKRAKLDGQKKSCEEGPEEQQGCAGEHGEDGVEEMVIEVGESVQDWVMRSPGQLGELPLMTGKHLATREEGQSGTAALAKQGPRGPEAACEGSQAEAEKRVSLTVSWRCALWHRVWQGRRRARRRLQQQIKEGGGSGAGSGAEWLATEAQVTRELRGLSSTEQRPEAEPLLTFVASTSQADQSLTVTPLQDSQGLFPDLHHFLQVFLPQALRNLLK.

The Matrin-type zinc finger occupies 16–46 (FRCCLCHITTANQPSLDAHLGGRKHRHLVEL). One can recognise an RRM domain in the interval 56–128 (RSVFVSGFPR…RRLRVRPREQ (73 aa)). Ser205 serves as a coordination point for ATP. Mg(2+) contacts are provided by Asp216 and Asp218. Asp216 and Asp218 together coordinate UTP. Residues 252–321 (QALACTPASP…QEDQGDGDQG (70 aa)) are disordered. A compositionally biased stretch (pro residues) spans 259 to 269 (ASPPDSQPPAS). Position 392 (Asn392) interacts with ATP. UTP contacts are provided by Asn392, Arg414, Tyr432, and His547. The PAP-associated domain occupies 489 to 547 (LSSLLAQFFSCVSCWDLRGSLLSLREGQALSVAGGLPSNLSEGLRLGPMNLQDPFDLSH). The segment at 596–871 (SSPSSILSAT…LPQALRNLLK (276 aa)) is KA1; binds the bulging loops of U6 snRNA but is dispensable for terminal uridylyltransferase activity. The interval 636 to 684 (GTKRLRSEGGGPGEPPQGGTSKRAKLDGQKKSCEEGPEEQQGCAGEHGE) is disordered. The segment covering 659–669 (AKLDGQKKSCE) has biased composition (basic and acidic residues). A Phosphoserine modification is found at Ser748.

Belongs to the DNA polymerase type-B-like family. As to quaternary structure, associates with the cleavage and polyadenylation specificity factor (CPSF) complex. Interacts with CPSF1 and CPSF3; the interaction is direct. Interacts with PIP5K1A. Mg(2+) is required as a cofactor. Requires Mn(2+) as cofactor. Phosphorylated by CK1 in the proline-rich (Pro-rich) region.

It is found in the nucleus. The protein localises to the nucleolus. Its subcellular location is the nucleus speckle. It catalyses the reaction RNA(n) + UTP = RNA(n)-3'-uridine ribonucleotide + diphosphate. The catalysed reaction is RNA(n) + ATP = RNA(n)-3'-adenine ribonucleotide + diphosphate. With respect to regulation, adenylyltransferase activity is specifically phosphatidylinositol 4,5-bisphosphate (PtdIns(4,5)P2). Poly(A) polymerase that creates the 3'-poly(A) tail of specific pre-mRNAs. Localizes to nuclear speckles together with PIP5K1A and mediates polyadenylation of a select set of mRNAs, such as HMOX1. In addition to polyadenylation, it is also required for the 3'-end cleavage of pre-mRNAs: binds to the 3'UTR of targeted pre-mRNAs and promotes the recruitment and assembly of the CPSF complex on the 3'UTR of pre-mRNAs. In addition to adenylyltransferase activity, also has uridylyltransferase activity. However, the ATP ratio is higher than UTP in cells, suggesting that it functions primarily as a poly(A) polymerase. Acts as a specific terminal uridylyltransferase for U6 snRNA in vitro: responsible for a controlled elongation reaction that results in the restoration of the four 3'-terminal UMP-residues found in newly transcribed U6 snRNA. Not involved in replication-dependent histone mRNA degradation. This is Speckle targeted PIP5K1A-regulated poly(A) polymerase (TUT1) from Bos taurus (Bovine).